A 213-amino-acid polypeptide reads, in one-letter code: Small ribosomal subunit protein eS6 (213 aa).

Belongs to the eukaryotic ribosomal protein eS6 family.

The protein is Small ribosomal subunit protein eS6 of Sulfolobus acidocaldarius (strain ATCC 33909 / DSM 639 / JCM 8929 / NBRC 15157 / NCIMB 11770).